The primary structure comprises 780 residues: Vezatin (780 aa).

The next 2 membrane-spanning stretches (helical) occupy residues 140–160 (ATPNTWDVSLLFAFISLLIMF) and 162–182 (TCWIVSSWLVWGIILFLYLII). A coiled-coil region spans residues 430–467 (VRSLQLHLKALLNEVIILEDELEKLVCTKETQELLSEA). Disordered regions lie at residues 620-718 (DPVE…PRDT) and 757-780 (QEQTFGDEEEEQLVEGGENEVEEK). Over residues 624–643 (SVSNSEPPMNSDTEKVNSNA) the composition is skewed to polar residues. Basic and acidic residues-rich tracts occupy residues 647 to 663 (ETSKPCAGDKEDSRTEY) and 690 to 699 (TMCHQHESEA). Residues 702–711 (PQAAAAGATA) are compositionally biased toward low complexity. Over residues 761-780 (FGDEEEEQLVEGGENEVEEK) the composition is skewed to acidic residues.

Belongs to the vezatin family. Interacts with USH2A (via the cytoplasmic region); the interaction associates VEZT with the USH2 complex at the stereocilia base. Interacts with myosin MYO7A and the cadherin-catenins complex. In terms of tissue distribution, expressed in developing cochlear hair cells. Isoform 1, isoform 2 and isoform 3 are expressed in testis. In the seminiferous epithelium, present exclusively in the acrosome of spermatids (at protein level).

The protein resides in the cell membrane. The protein localises to the cell projection. It is found in the stereocilium membrane. Its subcellular location is the cell junction. It localises to the adherens junction. The protein resides in the nucleus. The protein localises to the cytoplasmic vesicle. It is found in the secretory vesicle. Its subcellular location is the acrosome. In terms of biological role, plays a pivotal role in the establishment of adherens junctions and their maintenance in adult life. Required for morphogenesis of the preimplantation embryo, and for the implantation process. In Mus musculus (Mouse), this protein is Vezatin.